The following is a 355-amino-acid chain: DNA-binding protein RHL1 (355 aa).

Disordered regions lie at residues M1 to K26, D181 to E215, and I229 to A355. Positions G14–K23 are enriched in basic and acidic residues. Composition is skewed to low complexity over residues Q230 to V246 and A260 to N274. 2 stretches are compositionally biased toward basic and acidic residues: residues K281 to S296 and L309 to K326. Low complexity predominate over residues A344–A355.

Interacts with BIN4 and TOP6A, but not with TOP6B. Expressed inproliferating and endoreduplicating cells.

It localises to the nucleus. Component of the DNA topoisomerase VI complex involved in chromatin organization and progression of endoreduplication cycles. Binds to DNA. Required for endoreduplication beyond 8C. This Arabidopsis thaliana (Mouse-ear cress) protein is DNA-binding protein RHL1 (RHL1).